The primary structure comprises 210 residues: Na(+)-translocating NADH-quinone reductase subunit D (210 aa).

Transmembrane regions (helical) follow at residues 14–34 (PIVN…ALAV), 42–62 (LVMA…ISMI), 72–92 (IIVQ…LLQA), 103–123 (VFVG…AYAM), 131–151 (FMDG…VGFV), and 178–198 (NGLL…IWII).

Belongs to the NqrDE/RnfAE family. As to quaternary structure, composed of six subunits; NqrA, NqrB, NqrC, NqrD, NqrE and NqrF.

The protein localises to the cell inner membrane. It carries out the reaction a ubiquinone + n Na(+)(in) + NADH + H(+) = a ubiquinol + n Na(+)(out) + NAD(+). Functionally, NQR complex catalyzes the reduction of ubiquinone-1 to ubiquinol by two successive reactions, coupled with the transport of Na(+) ions from the cytoplasm to the periplasm. NqrA to NqrE are probably involved in the second step, the conversion of ubisemiquinone to ubiquinol. The protein is Na(+)-translocating NADH-quinone reductase subunit D of Shewanella sp. (strain ANA-3).